The primary structure comprises 272 residues: Putative pyruvate, phosphate dikinase regulatory protein (272 aa).

147–154 (GLSRTSKT) is a binding site for ADP.

This sequence belongs to the pyruvate, phosphate/water dikinase regulatory protein family. PDRP subfamily.

It catalyses the reaction N(tele)-phospho-L-histidyl/L-threonyl-[pyruvate, phosphate dikinase] + ADP = N(tele)-phospho-L-histidyl/O-phospho-L-threonyl-[pyruvate, phosphate dikinase] + AMP + H(+). The enzyme catalyses N(tele)-phospho-L-histidyl/O-phospho-L-threonyl-[pyruvate, phosphate dikinase] + phosphate + H(+) = N(tele)-phospho-L-histidyl/L-threonyl-[pyruvate, phosphate dikinase] + diphosphate. In terms of biological role, bifunctional serine/threonine kinase and phosphorylase involved in the regulation of the pyruvate, phosphate dikinase (PPDK) by catalyzing its phosphorylation/dephosphorylation. This is Putative pyruvate, phosphate dikinase regulatory protein from Clostridium botulinum (strain Alaska E43 / Type E3).